Here is a 235-residue protein sequence, read N- to C-terminus: Sugar fermentation stimulation protein homolog (235 aa).

This sequence belongs to the SfsA family.

In Roseobacter denitrificans (strain ATCC 33942 / OCh 114) (Erythrobacter sp. (strain OCh 114)), this protein is Sugar fermentation stimulation protein homolog.